Reading from the N-terminus, the 358-residue chain is UDP-N-acetylglucosamine--N-acetylmuramyl-(pentapeptide) pyrophosphoryl-undecaprenol N-acetylglucosamine transferase (358 aa).

UDP-N-acetyl-alpha-D-glucosamine is bound by residues 11-13 (TGG), Asn-124, Arg-164, Ser-195, and Gln-291.

This sequence belongs to the glycosyltransferase 28 family. MurG subfamily.

It is found in the cell inner membrane. The enzyme catalyses di-trans,octa-cis-undecaprenyl diphospho-N-acetyl-alpha-D-muramoyl-L-alanyl-D-glutamyl-meso-2,6-diaminopimeloyl-D-alanyl-D-alanine + UDP-N-acetyl-alpha-D-glucosamine = di-trans,octa-cis-undecaprenyl diphospho-[N-acetyl-alpha-D-glucosaminyl-(1-&gt;4)]-N-acetyl-alpha-D-muramoyl-L-alanyl-D-glutamyl-meso-2,6-diaminopimeloyl-D-alanyl-D-alanine + UDP + H(+). It participates in cell wall biogenesis; peptidoglycan biosynthesis. Functionally, cell wall formation. Catalyzes the transfer of a GlcNAc subunit on undecaprenyl-pyrophosphoryl-MurNAc-pentapeptide (lipid intermediate I) to form undecaprenyl-pyrophosphoryl-MurNAc-(pentapeptide)GlcNAc (lipid intermediate II). The polypeptide is UDP-N-acetylglucosamine--N-acetylmuramyl-(pentapeptide) pyrophosphoryl-undecaprenol N-acetylglucosamine transferase (Leptospira interrogans serogroup Icterohaemorrhagiae serovar copenhageni (strain Fiocruz L1-130)).